The chain runs to 329 residues: Biotin synthase (329 aa).

The 230-residue stretch at 46–275 (FFGRRLKLVR…LNPKAELRAS (230 aa)) folds into the Radical SAM core domain. 3 residues coordinate [4Fe-4S] cluster: C64, C68, and C71. [2Fe-2S] cluster is bound by residues C108, C140, C200, and R273.

Belongs to the radical SAM superfamily. Biotin synthase family. In terms of assembly, homodimer. [4Fe-4S] cluster serves as cofactor. It depends on [2Fe-2S] cluster as a cofactor.

The catalysed reaction is (4R,5S)-dethiobiotin + (sulfur carrier)-SH + 2 reduced [2Fe-2S]-[ferredoxin] + 2 S-adenosyl-L-methionine = (sulfur carrier)-H + biotin + 2 5'-deoxyadenosine + 2 L-methionine + 2 oxidized [2Fe-2S]-[ferredoxin]. The protein operates within cofactor biosynthesis; biotin biosynthesis; biotin from 7,8-diaminononanoate: step 2/2. Functionally, catalyzes the conversion of dethiobiotin (DTB) to biotin by the insertion of a sulfur atom into dethiobiotin via a radical-based mechanism. The chain is Biotin synthase from Thermus thermophilus (strain ATCC 27634 / DSM 579 / HB8).